A 497-amino-acid polypeptide reads, in one-letter code: MEKKYILALDQGTTSSRAMIIDEEGEVIGVAQEEFDQIFPKPGWVEHNANEIWASILAVIAGVLLKTNISSKEIAGIGITNQRETTVIWDKESGNPIYNAIVWQSRQTEDICKQLRKDGYEDTIRSKTGLLIDPYFAGTKARWILDHVDGAQERAEKGELLFGTIDTWLVWKLTGGRAHITDYSNASRTLLYNIYDLEWDDELLKMLNIPKAMLPEVRPSSEVYADTVPYHFFGEEVPVAGIAGDQQAALFGQGCFEKGMAKNTYGTGCFLLMNTGEKAVRSENGLLTTLAWGIDGKVEYALEGSIFVAGSAIQWLRDGLRMVRQSSDSENYASRIESSDGVYVVPAFVGLGAPYWDSDVRGAVFGLTRGTEKEQFIRATLESLAYQTRDVLYAMEQDSGISLKTLRVDGGASANNFLMQFQSDILGVPVERPENKETTVLGAAFLAGLAVGVWKDKNEIKKHWKLDKRFEVEMKDEQREDLYEGWHKAVKAAQAFK.

Thr-13 contacts ADP. Thr-13, Thr-14, and Ser-15 together coordinate ATP. Thr-13 lines the sn-glycerol 3-phosphate pocket. An ADP-binding site is contributed by Arg-17. 3 residues coordinate sn-glycerol 3-phosphate: Arg-83, Glu-84, and Tyr-135. Residues Arg-83, Glu-84, and Tyr-135 each contribute to the glycerol site. The residue at position 231 (His-231) is a Phosphohistidine; by HPr. Residue Asp-245 coordinates sn-glycerol 3-phosphate. Glycerol is bound by residues Asp-245 and Gln-246. ADP-binding residues include Thr-267 and Gly-310. ATP contacts are provided by Thr-267, Gly-310, Gln-314, and Gly-411. The ADP site is built by Gly-411 and Asn-415.

It belongs to the FGGY kinase family. Homotetramer and homodimer (in equilibrium). The phosphoenolpyruvate-dependent sugar phosphotransferase system (PTS), including enzyme I, and histidine-containing protein (HPr) are required for the phosphorylation, which leads to the activation of the enzyme.

The catalysed reaction is glycerol + ATP = sn-glycerol 3-phosphate + ADP + H(+). Its pathway is polyol metabolism; glycerol degradation via glycerol kinase pathway; sn-glycerol 3-phosphate from glycerol: step 1/1. Its activity is regulated as follows. Activated by phosphorylation and inhibited by fructose 1,6-bisphosphate (FBP). Its function is as follows. Key enzyme in the regulation of glycerol uptake and metabolism. Catalyzes the phosphorylation of glycerol to yield sn-glycerol 3-phosphate. This Listeria monocytogenes serotype 4b (strain F2365) protein is Glycerol kinase.